Reading from the N-terminus, the 366-residue chain is Chorismate synthase (366 aa).

An NADP(+)-binding site is contributed by Arg48. Residues 125 to 127, 238 to 239, Gly278, 293 to 297, and Arg319 contribute to the FMN site; these read RSS, NA, and KPTSS.

It belongs to the chorismate synthase family. In terms of assembly, homotetramer. FMNH2 is required as a cofactor.

The enzyme catalyses 5-O-(1-carboxyvinyl)-3-phosphoshikimate = chorismate + phosphate. It participates in metabolic intermediate biosynthesis; chorismate biosynthesis; chorismate from D-erythrose 4-phosphate and phosphoenolpyruvate: step 7/7. Its function is as follows. Catalyzes the anti-1,4-elimination of the C-3 phosphate and the C-6 proR hydrogen from 5-enolpyruvylshikimate-3-phosphate (EPSP) to yield chorismate, which is the branch point compound that serves as the starting substrate for the three terminal pathways of aromatic amino acid biosynthesis. This reaction introduces a second double bond into the aromatic ring system. The polypeptide is Chorismate synthase (Hydrogenovibrio crunogenus (strain DSM 25203 / XCL-2) (Thiomicrospira crunogena)).